The chain runs to 208 residues: Protein-L-isoaspartate O-methyltransferase (208 aa).

Ser59 is a catalytic residue.

Belongs to the methyltransferase superfamily. L-isoaspartyl/D-aspartyl protein methyltransferase family.

The protein localises to the cytoplasm. It catalyses the reaction [protein]-L-isoaspartate + S-adenosyl-L-methionine = [protein]-L-isoaspartate alpha-methyl ester + S-adenosyl-L-homocysteine. Functionally, catalyzes the methyl esterification of L-isoaspartyl residues in peptides and proteins that result from spontaneous decomposition of normal L-aspartyl and L-asparaginyl residues. It plays a role in the repair and/or degradation of damaged proteins. The protein is Protein-L-isoaspartate O-methyltransferase of Escherichia coli O7:K1 (strain IAI39 / ExPEC).